The primary structure comprises 562 residues: Membrane protein insertase YidC (562 aa).

A helical transmembrane segment spans residues 1–21 (MDIKRTILIVALAIVTYVGVL). The interval 42–74 (TAPGIPDTAAGNNGSASADVPSATGNTTSAAPL) is disordered. Helical transmembrane passes span 343-363 (LELTVDYGFLWFIAQPIFWLL), 369-389 (ILGNWGWSIIVLTMLIKGLFF), 439-459 (LGGCLPILVQMPVFLSLYWVL), 470-490 (WILWITDLSIKDPFFILPIIM), and 517-537 (PIIFTFFFLWFPAGLVLYWVV).

The protein belongs to the OXA1/ALB3/YidC family. Type 1 subfamily. In terms of assembly, interacts with the Sec translocase complex via SecD. Specifically interacts with transmembrane segments of nascent integral membrane proteins during membrane integration.

It is found in the cell inner membrane. In terms of biological role, required for the insertion and/or proper folding and/or complex formation of integral membrane proteins into the membrane. Involved in integration of membrane proteins that insert both dependently and independently of the Sec translocase complex, as well as at least some lipoproteins. Aids folding of multispanning membrane proteins. The sequence is that of Membrane protein insertase YidC from Pseudomonas syringae pv. tomato (strain ATCC BAA-871 / DC3000).